Reading from the N-terminus, the 419-residue chain is UDP-N-acetylglucosamine 1-carboxyvinyltransferase (419 aa).

Position 22–23 (22–23 (KN)) interacts with phosphoenolpyruvate. Position 91 (Arg91) interacts with UDP-N-acetyl-alpha-D-glucosamine. The Proton donor role is filled by Cys115. 2-(S-cysteinyl)pyruvic acid O-phosphothioketal is present on Cys115. Residues 120 to 124 (RPVDL), 160 to 163 (KVSV), Asp305, and Ile327 contribute to the UDP-N-acetyl-alpha-D-glucosamine site.

This sequence belongs to the EPSP synthase family. MurA subfamily.

It localises to the cytoplasm. The enzyme catalyses phosphoenolpyruvate + UDP-N-acetyl-alpha-D-glucosamine = UDP-N-acetyl-3-O-(1-carboxyvinyl)-alpha-D-glucosamine + phosphate. It functions in the pathway cell wall biogenesis; peptidoglycan biosynthesis. In terms of biological role, cell wall formation. Adds enolpyruvyl to UDP-N-acetylglucosamine. In Citrobacter koseri (strain ATCC BAA-895 / CDC 4225-83 / SGSC4696), this protein is UDP-N-acetylglucosamine 1-carboxyvinyltransferase.